We begin with the raw amino-acid sequence, 401 residues long: 3-oxoadipyl-CoA/3-oxo-5,6-dehydrosuberyl-CoA thiolase (401 aa).

Cysteine 90 (acyl-thioester intermediate) is an active-site residue. Residues histidine 357 and cysteine 387 each act as proton acceptor in the active site.

It belongs to the thiolase-like superfamily. Thiolase family.

The catalysed reaction is succinyl-CoA + acetyl-CoA = 3-oxoadipyl-CoA + CoA. It carries out the reaction 2,3-didehydroadipoyl-CoA + acetyl-CoA = 3-oxo-5,6-didehydrosuberyl-CoA + CoA. The protein operates within aromatic compound metabolism; phenylacetate degradation. Functionally, catalyzes the thiolytic cleavage of the beta-keto C8 intermediate 3-oxo-5,6-dehydrosuberyl-CoA with CoA to yield the C6 intermediate 2,3-dehydroadipyl-CoA and acetyl-CoA. Besides it catalyzes also the last step of the pathway, in which 3-oxoadipyl-CoA similarly is cleaved to acetyl-CoA and succinyl-CoA. The polypeptide is 3-oxoadipyl-CoA/3-oxo-5,6-dehydrosuberyl-CoA thiolase (paaJ) (Escherichia coli (strain K12)).